Reading from the N-terminus, the 221-residue chain is MDHARLIESLVRRGIIKTEKVRRAAERVKRELFVPERYKEVAYEDIPLPIGDDQTISAPHMVFIMNEVLDLEEGQLVLEVGSGSGYHAATIAEIVAPSDSPPSRWGAVITVEINPRLASLAFENLSKAGYSSRVHVVNADGSSGLPLRRKVDRIVVTAAAPQIPPPLIEMLADGGKLVIPVGSPGFWGQDLLLVEKRGNNIIKKHITEVAFVPLRGRYGWS.

The active site involves Ser57.

The protein belongs to the methyltransferase superfamily. L-isoaspartyl/D-aspartyl protein methyltransferase family.

The protein localises to the cytoplasm. The enzyme catalyses [protein]-L-isoaspartate + S-adenosyl-L-methionine = [protein]-L-isoaspartate alpha-methyl ester + S-adenosyl-L-homocysteine. Functionally, catalyzes the methyl esterification of L-isoaspartyl residues in peptides and proteins that result from spontaneous decomposition of normal L-aspartyl and L-asparaginyl residues. It plays a role in the repair and/or degradation of damaged proteins. In Korarchaeum cryptofilum (strain OPF8), this protein is Protein-L-isoaspartate O-methyltransferase.